The sequence spans 457 residues: Cystathionine beta-lyase (457 aa).

Residues 1–41 (MSTPNSDSPAAQAAKKVFSRLDLDGHNLPPSPAPSSPHNGR) are disordered.

This sequence belongs to the trans-sulfuration enzymes family. Pyridoxal 5'-phosphate serves as cofactor.

Its subcellular location is the cytoplasm. It is found in the nucleus. The catalysed reaction is L,L-cystathionine + H2O = L-homocysteine + pyruvate + NH4(+). It carries out the reaction an S-substituted L-cysteine + H2O = a thiol + pyruvate + NH4(+). Its pathway is amino-acid biosynthesis; L-methionine biosynthesis via de novo pathway; L-homocysteine from L-cystathionine: step 1/1. Functionally, involved in de novo synthesis of methionine. The polypeptide is Cystathionine beta-lyase (met-2) (Neurospora crassa (strain ATCC 24698 / 74-OR23-1A / CBS 708.71 / DSM 1257 / FGSC 987)).